We begin with the raw amino-acid sequence, 154 residues long: Crossover junction endodeoxyribonuclease RuvC (154 aa).

Residues aspartate 7, glutamate 67, and aspartate 139 contribute to the active site. Residues aspartate 7, glutamate 67, and aspartate 139 each coordinate Mg(2+).

This sequence belongs to the RuvC family. In terms of assembly, homodimer which binds Holliday junction (HJ) DNA. The HJ becomes 2-fold symmetrical on binding to RuvC with unstacked arms; it has a different conformation from HJ DNA in complex with RuvA. In the full resolvosome a probable DNA-RuvA(4)-RuvB(12)-RuvC(2) complex forms which resolves the HJ. Requires Mg(2+) as cofactor.

It is found in the cytoplasm. The catalysed reaction is Endonucleolytic cleavage at a junction such as a reciprocal single-stranded crossover between two homologous DNA duplexes (Holliday junction).. The RuvA-RuvB-RuvC complex processes Holliday junction (HJ) DNA during genetic recombination and DNA repair. Endonuclease that resolves HJ intermediates. Cleaves cruciform DNA by making single-stranded nicks across the HJ at symmetrical positions within the homologous arms, yielding a 5'-phosphate and a 3'-hydroxyl group; requires a central core of homology in the junction. The consensus cleavage sequence is 5'-(A/T)TT(C/G)-3'. Cleavage occurs on the 3'-side of the TT dinucleotide at the point of strand exchange. HJ branch migration catalyzed by RuvA-RuvB allows RuvC to scan DNA until it finds its consensus sequence, where it cleaves and resolves the cruciform DNA. The chain is Crossover junction endodeoxyribonuclease RuvC from Prochlorococcus marinus (strain MIT 9313).